Reading from the N-terminus, the 492-residue chain is GMP reductase (492 aa).

Residues 30 to 31 (SR) and arginine 78 each bind NADP(+). CBS domains are found at residues 99–162 (LIED…LVET) and 164–223 (MTPV…LNAT). NADP(+) contacts are provided by residues 260 to 262 (DIA) and 313 to 314 (VG). K(+) is bound by residues glycine 314, glycine 316, and cysteine 319. Cysteine 319 acts as the Thioimidate intermediate in catalysis. Catalysis depends on threonine 321, which acts as the Proton donor/acceptor. K(+) is bound at residue arginine 322. GMP-binding positions include 352 to 354 (DGG), 375 to 376 (GN), and 401 to 403 (GMA). NADP(+)-binding positions include methionine 402 and 454-457 (SGIS). The short motif at 490–492 (SKL) is the Microbody targeting signal element.

This sequence belongs to the IMPDH/GMPR family. GuaC type 1 subfamily. Homotetramer.

The protein resides in the glycosome. The catalysed reaction is IMP + NH4(+) + NADP(+) = GMP + NADPH + 2 H(+). With respect to regulation, activated by GTP and inhibited by ATP and IMP. Mycophenolic acid (MPA) is a competitive inhibitor of the enzyme with respect to NADPH. Functionally, catalyzes the irreversible NADPH-dependent deamination of GMP to IMP. It functions in the conversion of nucleobase, nucleoside and nucleotide derivatives of G to A nucleotides, and in maintaining the intracellular balance of A and G nucleotides. In Leishmania major, this protein is GMP reductase.